A 137-amino-acid chain; its full sequence is Large ribosomal subunit protein uL16 (137 aa).

This sequence belongs to the universal ribosomal protein uL16 family. Part of the 50S ribosomal subunit.

In terms of biological role, binds 23S rRNA and is also seen to make contacts with the A and possibly P site tRNAs. In Pseudomonas entomophila (strain L48), this protein is Large ribosomal subunit protein uL16.